We begin with the raw amino-acid sequence, 481 residues long: Calcium uptake protein 1, mitochondrial (481 aa).

Residues 1–33 constitute a mitochondrion transit peptide; the sequence is MFRLHSLSALAELAVGSRCYHGGSQPTQMKRRL. Positions 58-82 are disordered; the sequence is ESPPSVNNPKSELGDKGKNKDEGEV. The span at 69 to 82 shows a compositional bias: basic and acidic residues; the sequence is ELGDKGKNKDEGEV. A polybasic region region spans residues 101-112; the sequence is KKKKRSGFRDRK. Ser124 is subject to Phosphoserine. A k/R-ring region spans residues 128 to 131; that stretch reads KIFR. The EF-hand 1 domain maps to 220-255; sequence TPQRNFEIAFKMFDLNGDGEVDMEEFEQASCPGNII. Positions 233, 235, 237, 239, and 244 each coordinate Ca(2+). A k/R-ring region spans residues 264-268; sequence RHRDR. The EF-hand 2 domain occupies 413–448; it reads LSDHVCDVVFALFDCDGNGELSNKEFVSIMKQRLMR. 5 residues coordinate Ca(2+): Asp426, Asp428, Asn430, Glu432, and Glu437. An Asymmetric dimethylarginine modification is found at Arg460. The tract at residues 460 to 470 is C-helix region; the sequence is RLMQAMWKCAQ.

This sequence belongs to the MICU1 family. MICU1 subfamily. In terms of assembly, heterodimer; disulfide-linked; heterodimerizes with MICU2 or MICU3. Homodimer; disulfide-linked. Component of the uniplex complex, composed of MCU, EMRE/SMDT1, MICU1 and MICU2 (or MICU3) in a 4:4:1:1 stoichiometry. The composition of calcium sensors within the uniplex complex can differ depending on tissues: a MICU1 homodimer can be present instead of the MICU1-MICU2 heterodimer in skeletal-muscle and kidney. MICU1 is recruited to the uniplex complex by EMRE/SMDT1, and it associates with MCU at low calcium levels, occluding the pore of the MCU channel. Associates with the MICOS complex. Interacts with SLC25A23. Interacts with CHCHD4/MIA40; which introduces the interchain disulfide bond with MICU2. Interacts (when methylated) with UCP2; leading to decrease the calcium sensitivity of MICU1. In terms of processing, phosphorylation at Ser-124 by AKT1 impairs its maturation and stability. Post-translationally, asymmetric dimethylation at Arg-460 by PRMT1 decreases the calcium sensitivity of MICU1 by promoting interaction with UCP2. Degraded by YME1L1 when not complexed as homodimer or heterodimer. Not degraded when complexed as homodimer or heterodimer; the presence of the interchain disulfide bond protecting MICU1 from degradation by YME1L1.

The protein localises to the mitochondrion intermembrane space. Its subcellular location is the mitochondrion inner membrane. Functionally, calcium sensor of the mitochondrial calcium uniporter (MCU) channel, which senses calcium level via its EF-hand domains. MICU1 and MICU2 (or MICU3) form a disulfide-linked heterodimer that stimulates and inhibits MCU activity, depending on the concentration of calcium. At low calcium levels, MICU1 occludes the pore of the MCU channel, preventing mitochondrial calcium uptake. At higher calcium levels, calcium-binding to MICU1 and MICU2 (or MICU3) induces a conformational change that weakens MCU-MICU1 interactions and moves the MICU1-MICU2 heterodimer away from the pore, allowing calcium permeation through the MCU channel. Also required to protect against manganese toxicity by preventing manganese uptake by MCU: mechanistically, manganese-binding to its EF-hand domains does not induce any conformational change, maintaining MCU pore occlusion. Acts as a regulator of mitochondrial cristae structure independently of its ability to regulate the mitochondrial calcium uniporter channel. Regulates glucose-dependent insulin secretion in pancreatic beta-cells by regulating mitochondrial calcium uptake. Induces T-helper 1-mediated autoreactivity, which is accompanied by the release of IFNG. The chain is Calcium uptake protein 1, mitochondrial (MICU1) from Ailuropoda melanoleuca (Giant panda).